Reading from the N-terminus, the 393-residue chain is NAD(P)H-quinone oxidoreductase subunit H 1 (393 aa).

The protein belongs to the complex I 49 kDa subunit family. In terms of assembly, NDH-1 can be composed of about 15 different subunits; different subcomplexes with different compositions have been identified which probably have different functions.

It is found in the cell inner membrane. The enzyme catalyses a plastoquinone + NADH + (n+1) H(+)(in) = a plastoquinol + NAD(+) + n H(+)(out). It catalyses the reaction a plastoquinone + NADPH + (n+1) H(+)(in) = a plastoquinol + NADP(+) + n H(+)(out). Functionally, NDH-1 shuttles electrons from an unknown electron donor, via FMN and iron-sulfur (Fe-S) centers, to quinones in the respiratory and/or the photosynthetic chain. The immediate electron acceptor for the enzyme in this species is believed to be plastoquinone. Couples the redox reaction to proton translocation, and thus conserves the redox energy in a proton gradient. Cyanobacterial NDH-1 also plays a role in inorganic carbon-concentration. The protein is NAD(P)H-quinone oxidoreductase subunit H 1 of Gloeobacter violaceus (strain ATCC 29082 / PCC 7421).